A 495-amino-acid chain; its full sequence is 1-aminocyclopropane-1-carboxylate synthase 6 (495 aa).

Substrate-binding residues include Glu-58 and Tyr-96. N6-(pyridoxal phosphate)lysine is present on Lys-280. Phosphoserine occurs at positions 480, 483, and 488.

This sequence belongs to the class-I pyridoxal-phosphate-dependent aminotransferase family. As to quaternary structure, homodimer and heterodimer. In vivo, the relevance of heterodimerization with other ACS enzymes is however unsure. Interacts with GRF3. It depends on pyridoxal 5'-phosphate as a cofactor. Phosphorylated on serine residue by MAP kinase (MPK6). In terms of processing, may be processed at its C-terminus. Expressed in roots and flowers.

It carries out the reaction S-adenosyl-L-methionine = 1-aminocyclopropane-1-carboxylate + S-methyl-5'-thioadenosine + H(+). The protein operates within alkene biosynthesis; ethylene biosynthesis via S-adenosyl-L-methionine; ethylene from S-adenosyl-L-methionine: step 1/2. Functionally, 1-aminocyclopropane-1-carboxylate synthase (ACS) enzymes catalyze the conversion of S-adenosyl-L-methionine (SAM) into 1-aminocyclopropane-1-carboxylate (ACC), a direct precursor of ethylene. Involved in bacterial flagellin-induced ethylene production. The protein is 1-aminocyclopropane-1-carboxylate synthase 6 (ACS6) of Arabidopsis thaliana (Mouse-ear cress).